A 274-amino-acid polypeptide reads, in one-letter code: Type III pantothenate kinase (274 aa).

6–13 (DVGNTNTV) is a binding site for ATP. Substrate contacts are provided by residues Tyr-110 and 117-120 (GADR). The active-site Proton acceptor is Asp-119. A K(+)-binding site is contributed by Asp-139. Thr-142 contacts ATP. Thr-194 lines the substrate pocket.

It belongs to the type III pantothenate kinase family. Homodimer. It depends on NH4(+) as a cofactor. The cofactor is K(+).

The protein localises to the cytoplasm. The catalysed reaction is (R)-pantothenate + ATP = (R)-4'-phosphopantothenate + ADP + H(+). The protein operates within cofactor biosynthesis; coenzyme A biosynthesis; CoA from (R)-pantothenate: step 1/5. Its function is as follows. Catalyzes the phosphorylation of pantothenate (Pan), the first step in CoA biosynthesis. This chain is Type III pantothenate kinase, found in Koribacter versatilis (strain Ellin345).